The sequence spans 632 residues: DNA ligase (632 aa).

Residues 45–49 and 89–90 contribute to the NAD(+) site; these read NEDYD and SI. The active-site N6-AMP-lysine intermediate is the Lys127. Residues Arg143, Glu174, and Lys286 each coordinate NAD(+). Cys374, Cys377, Cys390, and Cys396 together coordinate Zn(2+). The region spanning 561 to 632 is the BRCT domain; the sequence is DKRIVFTGKM…EADYLSKITM (72 aa).

This sequence belongs to the NAD-dependent DNA ligase family. LigA subfamily. Requires Mg(2+) as cofactor. The cofactor is Mn(2+).

The enzyme catalyses NAD(+) + (deoxyribonucleotide)n-3'-hydroxyl + 5'-phospho-(deoxyribonucleotide)m = (deoxyribonucleotide)n+m + AMP + beta-nicotinamide D-nucleotide.. Its function is as follows. DNA ligase that catalyzes the formation of phosphodiester linkages between 5'-phosphoryl and 3'-hydroxyl groups in double-stranded DNA using NAD as a coenzyme and as the energy source for the reaction. It is essential for DNA replication and repair of damaged DNA. The polypeptide is DNA ligase (Vesicomyosocius okutanii subsp. Calyptogena okutanii (strain HA)).